A 508-amino-acid chain; its full sequence is TATA box-binding protein-like 1 (508 aa).

Disordered regions lie at residues 145–190, 236–262, and 456–479; these read QISY…QMHH, EPIP…PMPD, and QKKR…FDDS.

The protein belongs to the TBP family.

It localises to the nucleus. In terms of biological role, may be a general transcription factor. Plays an essential role for RNA polymerase II/ama-1 transcription in early embryos whereby it activates a subset of RNA polymerase II promoters and facilitates the reestablishment of transcription after mitosis. This chain is TATA box-binding protein-like 1, found in Caenorhabditis elegans.